We begin with the raw amino-acid sequence, 437 residues long: Enolase (437 aa).

Q162 lines the (2R)-2-phosphoglycerate pocket. E204 acts as the Proton donor in catalysis. Mg(2+)-binding residues include D251, E297, and D324. Positions 349, 378, 379, and 400 each coordinate (2R)-2-phosphoglycerate. Residue K349 is the Proton acceptor of the active site.

Belongs to the enolase family. Mg(2+) serves as cofactor.

The protein localises to the cytoplasm. Its subcellular location is the secreted. It is found in the cell surface. The enzyme catalyses (2R)-2-phosphoglycerate = phosphoenolpyruvate + H2O. It participates in carbohydrate degradation; glycolysis; pyruvate from D-glyceraldehyde 3-phosphate: step 4/5. Functionally, catalyzes the reversible conversion of 2-phosphoglycerate (2-PG) into phosphoenolpyruvate (PEP). It is essential for the degradation of carbohydrates via glycolysis. The protein is Enolase of Chlorobaculum parvum (strain DSM 263 / NCIMB 8327) (Chlorobium vibrioforme subsp. thiosulfatophilum).